The sequence spans 650 residues: Protein ANTI-SILENCING 1 (650 aa).

The BAH domain maps to 38–169; that stretch reads DEYRLYDCVL…VGSCKVVDTI (132 aa). Disordered stretches follow at residues 202-223, 229-248, 257-359, and 425-448; these read NGKS…GSVR, AFES…EKEK, KSTL…QKLD, and VTEK…ADDN. 2 stretches are compositionally biased toward basic and acidic residues: residues 259 to 270 and 277 to 287; these read TLAEERSNKDSG and NGKDQESEVKK. A compositionally biased stretch (polar residues) spans 302–315; it reads SNSFEASGSRTIHS. Composition is skewed to basic and acidic residues over residues 348-358 and 438-448; these read LDDRPLKKQKL and RAEDKMSADDN. Positions 486–569 constitute an RRM domain; it reads TVVLLQNLDP…RPLVASFAKI (84 aa).

As to quaternary structure, component of the ASI1-AIPP1-EDM2 (AAE) RNA regulatory complex composed of at least AIPP1/EDM3, ASI1 and EDM2 and may contain CPL2, AIPP2 and AIPP3/BDT1. Binds directly to AIPP1/EDM3 and AIPP2.

In terms of biological role, collaboratively with AIPP1/EDM3 and EDM2, the AAE complex regulates alternative RNA processing (e.g. alternative splicing) and epigenetic silencing (e.g. H3K9me2) of intronic heterochromatin-containing genes as well as genic heterochromatin-containing genes by promoting distal 3' polyadenylation; may associate with intronic heterochromatin and bind gene transcripts to modulate polyadenylation. Required to prevent promoter DNA hypermethylation and transcriptional silencing of some transgenes. Plays a similar role to that of the histone H3K9 demethylase JMJ25/IBM1 in preventing CHG methylation in the bodies of numerous genes. RNA-binding protein that ensures the proper expression of JMJ25/IBM1 full-length transcript by associating with an intronic heterochromatic repeat element of JMJ25/IBM1. Also modulates transposable elements (TE) expression. Contributes to a unique mechanism to deal with the collateral effect of silencing intronic repeat elements. The polypeptide is Protein ANTI-SILENCING 1 (Arabidopsis thaliana (Mouse-ear cress)).